The following is a 185-amino-acid chain: Large ribosomal subunit protein uL22 (185 aa).

It belongs to the universal ribosomal protein uL22 family. Part of the 50S ribosomal subunit.

This protein binds specifically to 23S rRNA. It makes multiple contacts with different domains of the 23S rRNA in the assembled 50S subunit and ribosome. Functionally, the globular domain of the protein is located near the polypeptide exit tunnel on the outside of the subunit, while an extended beta-hairpin is found that lines the wall of the exit tunnel in the center of the 70S ribosome. This is Large ribosomal subunit protein uL22 from Pyrobaculum islandicum (strain DSM 4184 / JCM 9189 / GEO3).